Reading from the N-terminus, the 777-residue chain is Phosphate transporter PHO1 homolog 10 (777 aa).

The SPX domain maps to 1 to 322 (MKFGKIFKKQ…SRNASRNYMK (322 aa)). Topologically, residues 1–372 (MKFGKIFKKQ…RPKVKRERHR (372 aa)) are cytoplasmic. Residues 373 to 393 (VTFFSGFFSGCSIALVIAVVF) form a helical membrane-spanning segment. The Extracellular portion of the chain corresponds to 394–408 (KIESRKIMEKNYGTE). The helical transmembrane segment at 409-429 (YMANIIPLYSLFGFIILHMLM) threads the bilayer. Residues 430 to 459 (YSANIYFWKRYRVNYTFIFGFKQGTELGDR) are Cytoplasmic-facing. A helical transmembrane segment spans residues 460-480 (EVFLVSTGLAVLAFVCFLLNL). Residues 481-496 (QLDMDWRMKHHKTLPE) lie on the Extracellular side of the membrane. Residues 497–517 (VIPLCLATIVLFILFCPFNII) traverse the membrane as a helical segment. The Cytoplasmic portion of the chain corresponds to 518–646 (YRSSRFFFIR…YELKKGRTWM (129 aa)). Residues 581 to 775 (HSHGVYNAFY…HYYDDDDVDK (195 aa)) form the EXS domain. A helical transmembrane segment spans residues 647–667 (ILALVSSGVATGMNTFWDIVI). Residues 668–691 (DWGLLRKHSKNPYLRDKLLVPHKS) are Extracellular-facing. Residues 692–712 (VYFAAMVVNVILRVAWMQLVL) form a helical membrane-spanning segment. The Cytoplasmic portion of the chain corresponds to 713 to 777 (EFNLKSLHKI…YDDDDVDKDD (65 aa)).

Belongs to the SYG1 (TC 2.A.94) family. As to expression, expressed in root epidermis and cortex, leaf blades and hydathodes, stems and flowers.

It localises to the cell membrane. May transport inorganic phosphate (Pi). This Arabidopsis thaliana (Mouse-ear cress) protein is Phosphate transporter PHO1 homolog 10 (PHO1-H10).